The chain runs to 292 residues: Probable 2-(5''-triphosphoribosyl)-3'-dephosphocoenzyme-A synthase (292 aa).

The protein belongs to the CitG/MdcB family.

The enzyme catalyses 3'-dephospho-CoA + ATP = 2'-(5''-triphospho-alpha-D-ribosyl)-3'-dephospho-CoA + adenine. The protein is Probable 2-(5''-triphosphoribosyl)-3'-dephosphocoenzyme-A synthase of Shigella sonnei (strain Ss046).